Consider the following 412-residue polypeptide: Peptidase T (412 aa).

His-78 is a Zn(2+) binding site. Asp-80 is a catalytic residue. Asp-140 serves as a coordination point for Zn(2+). Glu-173 serves as the catalytic Proton acceptor. Residues Glu-174, Asp-196, and His-379 each contribute to the Zn(2+) site.

The protein belongs to the peptidase M20B family. The cofactor is Zn(2+).

It is found in the cytoplasm. The enzyme catalyses Release of the N-terminal residue from a tripeptide.. Cleaves the N-terminal amino acid of tripeptides. This Edwardsiella ictaluri (strain 93-146) protein is Peptidase T.